A 100-amino-acid chain; its full sequence is UPF0473 protein Lm4b_01511 (100 aa).

Belongs to the UPF0473 family.

The chain is UPF0473 protein Lm4b_01511 from Listeria monocytogenes serotype 4b (strain CLIP80459).